The sequence spans 327 residues: GTPase Obg (327 aa).

The Obg domain maps to 1-159 (MKFLDQVKIY…YVIWLQLKTI (159 aa)). The region spanning 160–327 (ADVGIVGLPN…IKAKLLSYVS (168 aa)) is the OBG-type G domain. Residues 166–173 (GLPNAGKS), 191–195 (FTTLN), 212–215 (DIPG), 279–282 (NKTD), and 308–310 (STL) contribute to the GTP site. Ser173 and Thr193 together coordinate Mg(2+).

Belongs to the TRAFAC class OBG-HflX-like GTPase superfamily. OBG GTPase family. Monomer. Mg(2+) serves as cofactor.

It localises to the cytoplasm. An essential GTPase which binds GTP, GDP and possibly (p)ppGpp with moderate affinity, with high nucleotide exchange rates and a fairly low GTP hydrolysis rate. Plays a role in control of the cell cycle, stress response, ribosome biogenesis and in those bacteria that undergo differentiation, in morphogenesis control. This chain is GTPase Obg, found in Pelagibacter ubique (strain HTCC1062).